The primary structure comprises 118 residues: Large ribosomal subunit protein bL20 (118 aa).

Belongs to the bacterial ribosomal protein bL20 family.

Functionally, binds directly to 23S ribosomal RNA and is necessary for the in vitro assembly process of the 50S ribosomal subunit. It is not involved in the protein synthesizing functions of that subunit. This Pseudomonas fluorescens (strain ATCC BAA-477 / NRRL B-23932 / Pf-5) protein is Large ribosomal subunit protein bL20.